Here is a 2548-residue protein sequence, read N- to C-terminus: Unconventional myosin-IXa (2548 aa).

In terms of domain architecture, Ras-associating spans 14–112 (NEHTLRIYPG…YRFLLREKNL (99 aa)). One can recognise a Myosin motor domain in the interval 146-1016 (KDFDDLCSLP…ERQHLQDLLH (871 aa)). The chain crosses the membrane as a helical span at residues 175–195 (IYTYVGSILIVINPFKFLPIY). 239–246 (GESGSGKT) serves as a coordination point for ATP. Ser755 carries the post-translational modification Phosphoserine. Residues 898–920 (LSKLMETLGQAEPYFVKCIRSNA) are actin-binding. 5 consecutive IQ domains span residues 1021–1041 (RRII…HFLH), 1042–1071 (LRQA…QKDA), 1074–1103 (MASA…AAIV), 1115–1144 (RHMA…KIIL), and 1138–1167 (QRKK…QRLR). The segment at 1021-1162 (RRIILLQRWF…RARQRFKALK (142 aa)) is neck or regulatory domain. The segment at 1163-2511 (EQRLRETKPE…LKNVKNSPQK (1349 aa)) is tail. The span at 1223–1236 (SVDCLKESPNKQQE) shows a compositional bias: basic and acidic residues. A disordered region spans residues 1223–1250 (SVDCLKESPNKQQERAQSQSGVDLQEDV). Residues Ser1242 and Ser1258 each carry the phosphoserine modification. A coiled-coil region spans residues 1264–1291 (QKKVGRAKRESRRMRELEQAIFSLELLK). Phosphoserine occurs at positions 1299 and 1317. A disordered region spans residues 1299–1386 (SPSEDRRWST…SNETSSAEHL (88 aa)). Composition is skewed to low complexity over residues 1324–1337 (SESS…LSYE) and 1356–1366 (FPSPKISSSPK). Ser1364 bears the Phosphoserine mark. A compositionally biased stretch (polar residues) spans 1372-1381 (NALSASNETS). A coiled-coil region spans residues 1486–1532 (VLKKLEKLNTEKEERQKQLQQQNEKEMMEQIRQQTDILEKERKAFKT). Residues 1804–1836 (YHPTPPLSPELPGSCRKEFKENKEPSPKAKRKR) are disordered. Residues 1818–1830 (CRKEFKENKEPSP) show a composition bias toward basic and acidic residues. Ser1948 carries the phosphoserine modification. 2 Phorbol-ester/DAG-type zinc fingers span residues 1999–2048 (GHIF…TAKC) and 2068–2119 (LTSE…DAES). The 189-residue stretch at 2063 to 2251 (VELSRLTSED…LIVVEQMNKY (189 aa)) folds into the Rho-GAP domain. Ser2294 carries the phosphoserine modification. The stretch at 2315-2358 (AAMETDITEQQQAAMQQEERVLTEQIENLQKEKEELTFEMLVLE) forms a coiled coil. 2 disordered regions span residues 2359-2383 (PRAS…ENLN) and 2401-2424 (SSLK…KQQD). A Phosphoserine modification is found at Ser2464. The segment at 2490 to 2531 (RGTFNPEKGKQKLKNVKNSPQKTKETPEGTVMSGRRKTVDPD) is disordered.

The protein belongs to the TRAFAC class myosin-kinesin ATPase superfamily. Myosin family. Phosphorylated by ALPK1 following monosodium urate monohydrate (MSU)-induced inflammation. In terms of tissue distribution, found to be expressed in testis and placenta and at lower levels in all the examined tissues with the exception of liver. Isoform 5: Found in leukocytes but not in brain, retina or testis.

The protein localises to the membrane. It localises to the cytoplasm. It is found in the synapse. Its subcellular location is the cell projection. The protein resides in the growth cone. Myosins are actin-based motor molecules with ATPase activity. Unconventional myosins serve in intracellular movements. Regulates Rho by stimulating it's GTPase activity in neurons. Required for the regulation of neurite branching and motor neuron axon guidance. This Homo sapiens (Human) protein is Unconventional myosin-IXa (MYO9A).